The chain runs to 303 residues: Coenzyme PQQ synthesis protein B (303 aa).

Belongs to the PqqB family.

Its pathway is cofactor biosynthesis; pyrroloquinoline quinone biosynthesis. In terms of biological role, may be involved in the transport of PQQ or its precursor to the periplasm. This chain is Coenzyme PQQ synthesis protein B, found in Pseudomonas fluorescens (strain Pf0-1).